Here is a 316-residue protein sequence, read N- to C-terminus: Ribosomal protein L11 methyltransferase (316 aa).

S-adenosyl-L-methionine-binding residues include Thr-157, Gly-178, Asp-200, and Asn-243.

Belongs to the methyltransferase superfamily. PrmA family.

The protein localises to the cytoplasm. The catalysed reaction is L-lysyl-[protein] + 3 S-adenosyl-L-methionine = N(6),N(6),N(6)-trimethyl-L-lysyl-[protein] + 3 S-adenosyl-L-homocysteine + 3 H(+). Its function is as follows. Methylates ribosomal protein L11. This Streptococcus pneumoniae (strain 70585) protein is Ribosomal protein L11 methyltransferase.